A 485-amino-acid polypeptide reads, in one-letter code: Apolipoprotein N-acyltransferase (485 aa).

Helical transmembrane passes span 8–28, 49–69, 76–96, 121–141, 157–177, and 186–206; these read IAGA…IAFV, GWLF…VSIH, VPLA…FIAF, WWVV…WLFL, FGIY…YLLV, and IMCL…TFIP. The CN hydrolase domain occupies 220 to 457; it reads VQGNIGQRLK…RLLLTGQIKP (238 aa). The active-site Proton acceptor is Glu-259. Lys-317 is a catalytic residue. Catalysis depends on Cys-369, which acts as the Nucleophile. Residues 464–484 form a helical membrane-spanning segment; the sequence is LMRWNYYPVVGIIIIFLLLTF.

Belongs to the CN hydrolase family. Apolipoprotein N-acyltransferase subfamily.

The protein resides in the cell inner membrane. The enzyme catalyses N-terminal S-1,2-diacyl-sn-glyceryl-L-cysteinyl-[lipoprotein] + a glycerophospholipid = N-acyl-S-1,2-diacyl-sn-glyceryl-L-cysteinyl-[lipoprotein] + a 2-acyl-sn-glycero-3-phospholipid + H(+). Its pathway is protein modification; lipoprotein biosynthesis (N-acyl transfer). Its function is as follows. Catalyzes the phospholipid dependent N-acylation of the N-terminal cysteine of apolipoprotein, the last step in lipoprotein maturation. The protein is Apolipoprotein N-acyltransferase of Coxiella burnetii (strain RSA 493 / Nine Mile phase I).